Here is a 299-residue protein sequence, read N- to C-terminus: Coenzyme PQQ synthesis protein B (299 aa).

It belongs to the PqqB family.

It functions in the pathway cofactor biosynthesis; pyrroloquinoline quinone biosynthesis. May be involved in the transport of PQQ or its precursor to the periplasm. This is Coenzyme PQQ synthesis protein B from Xanthomonas axonopodis pv. citri (strain 306).